The sequence spans 116 residues: uncharacterized protein (116 aa).

An HTH cro/C1-type domain is found at 6–60 (LKKCRKQKKLTQQNMADKLGITRPAYTAYELGSREPDYKTLINISNILDVSLDYL). The H-T-H motif DNA-binding region spans 17–36 (QQNMADKLGITRPAYTAYEL).

This is an uncharacterized protein from Bacillus subtilis (strain 168).